The chain runs to 360 residues: UDP-N-acetylglucosamine--N-acetylmuramyl-(pentapeptide) pyrophosphoryl-undecaprenol N-acetylglucosamine transferase (360 aa).

Positions 198 and 289 each coordinate UDP-N-acetyl-alpha-D-glucosamine.

It belongs to the glycosyltransferase 28 family. MurG subfamily.

Its subcellular location is the cell membrane. The enzyme catalyses Mur2Ac(oyl-L-Ala-gamma-D-Glu-L-Lys-D-Ala-D-Ala)-di-trans,octa-cis-undecaprenyl diphosphate + UDP-N-acetyl-alpha-D-glucosamine = beta-D-GlcNAc-(1-&gt;4)-Mur2Ac(oyl-L-Ala-gamma-D-Glu-L-Lys-D-Ala-D-Ala)-di-trans,octa-cis-undecaprenyl diphosphate + UDP + H(+). Its pathway is cell wall biogenesis; peptidoglycan biosynthesis. In terms of biological role, cell wall formation. Catalyzes the transfer of a GlcNAc subunit on undecaprenyl-pyrophosphoryl-MurNAc-pentapeptide (lipid intermediate I) to form undecaprenyl-pyrophosphoryl-MurNAc-(pentapeptide)GlcNAc (lipid intermediate II). This is UDP-N-acetylglucosamine--N-acetylmuramyl-(pentapeptide) pyrophosphoryl-undecaprenol N-acetylglucosamine transferase from Streptococcus pyogenes serotype M3 (strain SSI-1).